A 420-amino-acid chain; its full sequence is Probable protein phosphatase 2C 73 (420 aa).

In terms of domain architecture, PPM-type phosphatase spans 33–336; it reads GVSMHTKQGW…DDCAVVCLFL (304 aa). The Mn(2+) site is built by Asp69 and Gly70. The segment covering 96-105 has biased composition (polar residues); the sequence is LKTEQDPSSN. The tract at residues 96-119 is disordered; it reads LKTEQDPSSNTDKETLEKSDCTSL. Residues 106–115 are compositionally biased toward basic and acidic residues; the sequence is TDKETLEKSD. Mn(2+) contacts are provided by Asp281 and Asp327.

It belongs to the PP2C family. It depends on Mg(2+) as a cofactor. The cofactor is Mn(2+).

The enzyme catalyses O-phospho-L-seryl-[protein] + H2O = L-seryl-[protein] + phosphate. It carries out the reaction O-phospho-L-threonyl-[protein] + H2O = L-threonyl-[protein] + phosphate. This is Probable protein phosphatase 2C 73 from Oryza sativa subsp. japonica (Rice).